Reading from the N-terminus, the 145-residue chain is D-aminoacyl-tRNA deacylase (145 aa).

Positions 137-138 (GP) match the Gly-cisPro motif, important for rejection of L-amino acids motif.

It belongs to the DTD family. As to quaternary structure, homodimer.

It is found in the cytoplasm. The enzyme catalyses glycyl-tRNA(Ala) + H2O = tRNA(Ala) + glycine + H(+). It carries out the reaction a D-aminoacyl-tRNA + H2O = a tRNA + a D-alpha-amino acid + H(+). Its function is as follows. An aminoacyl-tRNA editing enzyme that deacylates mischarged D-aminoacyl-tRNAs. Also deacylates mischarged glycyl-tRNA(Ala), protecting cells against glycine mischarging by AlaRS. Acts via tRNA-based rather than protein-based catalysis; rejects L-amino acids rather than detecting D-amino acids in the active site. By recycling D-aminoacyl-tRNA to D-amino acids and free tRNA molecules, this enzyme counteracts the toxicity associated with the formation of D-aminoacyl-tRNA entities in vivo and helps enforce protein L-homochirality. The sequence is that of D-aminoacyl-tRNA deacylase from Salmonella paratyphi C (strain RKS4594).